Consider the following 543-residue polypeptide: Carboxypeptidase Y homolog A (543 aa).

Residues 1–17 (MKVATSALLVGAVSASV) form the signal peptide. Residues 18–128 (GPQQQVLKFP…KLENYSMRTK (111 aa)) constitute a propeptide that is removed on maturation. N-linked (GlcNAc...) asparagine glycans are attached at residues Asn122 and Asn213. 5 disulfides stabilise this stretch: Cys182-Cys421, Cys316-Cys330, Cys340-Cys363, Cys347-Cys356, and Cys385-Cys391. Ser269 is an active-site residue. The active site involves Asp460. The N-linked (GlcNAc...) asparagine glycan is linked to Asn508. His519 is a catalytic residue.

It belongs to the peptidase S10 family.

It localises to the vacuole. It carries out the reaction Release of a C-terminal amino acid with broad specificity.. Its function is as follows. Vacuolar carboxypeptidase involved in degradation of small peptides. Digests preferentially peptides containing an aliphatic or hydrophobic residue in P1' position, as well as methionine, leucine or phenylalanine in P1 position of ester substrate. The polypeptide is Carboxypeptidase Y homolog A (CPYA) (Leptosphaeria maculans (strain JN3 / isolate v23.1.3 / race Av1-4-5-6-7-8) (Blackleg fungus)).